We begin with the raw amino-acid sequence, 685 residues long: ABC transporter G family member 26 (685 aa).

Positions 65-329 constitute an ABC transporter domain; that stretch reads LKFEDVEYKV…FSSLRILPEI (265 aa). Residue 124–131 coordinates ATP; the sequence is GPSGSGKT. In terms of domain architecture, ABC transmembrane type-2 spans 414–623; it reads DQFLILSRRT…GFRLLLKVQY (210 aa). 6 consecutive transmembrane segments (helical) span residues 432-452, 468-488, 518-538, 542-562, 576-596, and 648-668; these read FDKL…LLWW, LMFY…VYVF, MVAH…MAEF, IPCF…SQGA, AGMI…YYVQ, and TINL…AFGY.

It belongs to the ABC transporter superfamily. ABCG family. Eye pigment precursor importer (TC 3.A.1.204) subfamily. As to quaternary structure, homo- or heterodimer. As to expression, mostly expressed in flowers, especially in tapetum within anthers.

The protein localises to the cell membrane. Its subcellular location is the endoplasmic reticulum membrane. In terms of biological role, mediates the transport of sporopollenin precursors (e.g. polyketides) across the tapetum plasma membrane into the anther locule for polymerization on developing microspore walls, thus being required for male fertility and pollen exine formation and patterning prior to tapetum programmed cell death. This Arabidopsis thaliana (Mouse-ear cress) protein is ABC transporter G family member 26.